The primary structure comprises 206 residues: Guanylate kinase (206 aa).

In terms of domain architecture, Guanylate kinase-like spans 5 to 183; sequence FNLLILSGPS…SKEIILSIAK (179 aa). 12-19 serves as a coordination point for ATP; that stretch reads GPSGAGKS.

Belongs to the guanylate kinase family.

The protein resides in the cytoplasm. The catalysed reaction is GMP + ATP = GDP + ADP. Essential for recycling GMP and indirectly, cGMP. This is Guanylate kinase from Helicobacter pylori (strain HPAG1).